The chain runs to 403 residues: Cytochrome P450-SU2 (403 aa).

A disordered region spans residues 1–24 (MTTAERTAPPDALTVPASRAPGCP). C352 provides a ligand contact to heme.

Belongs to the cytochrome P450 family. The cofactor is heme.

Its function is as follows. Metabolism of a number of sulfonylurea herbicides. This Streptomyces griseolus protein is Cytochrome P450-SU2 (cyp105B1).